Reading from the N-terminus, the 540-residue chain is Chaperonin GroEL 1 (540 aa).

ATP-binding positions include Thr-29 to Pro-32, Asp-86 to Thr-90, Gly-413, Asn-477 to Ala-479, and Asp-493.

Belongs to the chaperonin (HSP60) family. As to quaternary structure, forms a cylinder of 14 subunits composed of two heptameric rings stacked back-to-back. Interacts with the co-chaperonin GroES.

The protein resides in the cytoplasm. The catalysed reaction is ATP + H2O + a folded polypeptide = ADP + phosphate + an unfolded polypeptide.. Its function is as follows. Together with its co-chaperonin GroES, plays an essential role in assisting protein folding. The GroEL-GroES system forms a nano-cage that allows encapsulation of the non-native substrate proteins and provides a physical environment optimized to promote and accelerate protein folding. This Salinispora arenicola (strain CNS-205) protein is Chaperonin GroEL 1.